The sequence spans 125 residues: Ribosome-binding factor A (125 aa).

This sequence belongs to the RbfA family. Monomer. Binds 30S ribosomal subunits, but not 50S ribosomal subunits or 70S ribosomes.

It is found in the cytoplasm. In terms of biological role, one of several proteins that assist in the late maturation steps of the functional core of the 30S ribosomal subunit. Associates with free 30S ribosomal subunits (but not with 30S subunits that are part of 70S ribosomes or polysomes). Required for efficient processing of 16S rRNA. May interact with the 5'-terminal helix region of 16S rRNA. This is Ribosome-binding factor A from Acidovorax sp. (strain JS42).